Reading from the N-terminus, the 237-residue chain is D-aminoacyl-tRNA deacylase (237 aa).

Belongs to the DtdA deacylase family. In terms of assembly, monomer. The cofactor is Zn(2+).

It catalyses the reaction a D-aminoacyl-tRNA + H2O = a tRNA + a D-alpha-amino acid + H(+). The catalysed reaction is glycyl-tRNA(Ala) + H2O = tRNA(Ala) + glycine + H(+). Functionally, D-aminoacyl-tRNA deacylase with broad substrate specificity. By recycling D-aminoacyl-tRNA to D-amino acids and free tRNA molecules, this enzyme counteracts the toxicity associated with the formation of D-aminoacyl-tRNA entities in vivo. This is D-aminoacyl-tRNA deacylase from Metallosphaera sedula (strain ATCC 51363 / DSM 5348 / JCM 9185 / NBRC 15509 / TH2).